The following is a 699-amino-acid chain: Protein Scribble homolog let-413 (699 aa).

LRR repeat units lie at residues 37–59, 60–81, 83–104, 106–127, 129–150, 152–174, 175–196, 198–219, 221–242, 244–265, 267–288, 290–311, 313–334, 336–357, 359–380, and 382–403; these read KLED…FSLR, HLRI…IGNL, QLIE…MQNC, LLTT…ICEC, SITI…IGSL, NLRV…VELR, KLEE…IGKL, SLRE…ISGC, MLDQ…LGRM, NLTD…FGEL, RLQM…IGKC, SLTE…IGDL, QLTT…IGNC, SLTV…IGKC, NLTV…VKVL, and KLQA…SETR. In terms of domain architecture, PDZ spans 584-665; it reads AGGTSNDPAP…RSPSPVSRTS (82 aa). Residues 656 to 699 form a disordered region; that stretch reads RSPSPVSRTSEPSLNGSSHQLNHFDAGSPDSTMFVTSSTPVYAS. Composition is skewed to polar residues over residues 659–676 and 684–699; these read SPVS…SHQL and PDST…VYAS.

This sequence belongs to the LAP (LRR and PDZ) protein family. Expressed in the terminal web of the intestine. Expressed in seam cells. Expressed in the basolateral surfaces of epithelia and the nervous system. Expressed in the intestine, epidermis, excretory canal, reproductive system including vulva, uterus and spermatheca, in both larval and adult stage animals.

Its subcellular location is the basolateral cell membrane. Its function is as follows. Critical role in assembling adherens junctions; adapter protein involved in polarizing protein trafficking in epithelial cells. Necessary to maintain, not establish, the entire terminal web (organelle-depleted, intermediate filament-rich layer of cytoplasm that underlies the apical microvilli of polarized epithelial cells) or brush border assembly at the apical surface gut cells. Required for correct localization of ifb-2 intermediate filaments in the terminal web. Required for dlg-1 and hmr-1 lateral localization. Maintains cell polarity by correctly positioning adherens junction protein components including ajm-1 and hmp-1 at discrete subapical positions. Plays a role in the correct localization of the dlg-1-ajm-1 complex, polarity protein par-3, and actin microfilament to the apical junction of spermatheca cells, and is required for ovulation. Regulates the establishment of newly-formed epithelia in conjunction with dlg-1. Required in the epidermis during larval development. Plays a role in cellular junction integrity and in the directed outgrowth of seam cells, towards neighboring seam cells, during larval development; probably acts by promoting the assembly and stability of dlg-1 at apical junctions. The polypeptide is Protein Scribble homolog let-413 (Caenorhabditis elegans).